Reading from the N-terminus, the 120-residue chain is MVKLTSIAAGVAAIAATASATTTLAQSDERVNLVELGVYVSDIRAHLAQYYMFQAAHPTETYPVEVAEAVFNYGDFTTMLTGIAPDQVTRMITGVPWYSSRLKPAISSALSKVGIYTIAN.

Positions 1 to 20 are cleaved as a signal peptide; it reads MVKLTSIAAGVAAIAATASA.

This sequence belongs to the SRP1/TIP1 family. Seripauperin subfamily.

This chain is Seripauperin-10 (PAU10), found in Saccharomyces cerevisiae (strain ATCC 204508 / S288c) (Baker's yeast).